We begin with the raw amino-acid sequence, 337 residues long: Glyceraldehyde-3-phosphate dehydrogenase (337 aa).

Residues 11-12 (TI) and Gly110 contribute to the NAD(+) site. Residue 139–141 (SCN) coordinates D-glyceraldehyde 3-phosphate. Catalysis depends on Cys140, which acts as the Nucleophile. Arg168 contacts NAD(+). Position 194 to 195 (194 to 195 (HG)) interacts with D-glyceraldehyde 3-phosphate. Gln301 contacts NAD(+).

It belongs to the glyceraldehyde-3-phosphate dehydrogenase family. In terms of assembly, homotetramer.

The protein localises to the cytoplasm. The catalysed reaction is D-glyceraldehyde 3-phosphate + phosphate + NADP(+) = (2R)-3-phospho-glyceroyl phosphate + NADPH + H(+). The enzyme catalyses D-glyceraldehyde 3-phosphate + phosphate + NAD(+) = (2R)-3-phospho-glyceroyl phosphate + NADH + H(+). Its pathway is carbohydrate degradation; glycolysis; pyruvate from D-glyceraldehyde 3-phosphate: step 1/5. The sequence is that of Glyceraldehyde-3-phosphate dehydrogenase (gap) from Methanothermobacter thermautotrophicus (strain ATCC 29096 / DSM 1053 / JCM 10044 / NBRC 100330 / Delta H) (Methanobacterium thermoautotrophicum).